A 46-amino-acid polypeptide reads, in one-letter code: Large ribosomal subunit protein bL34 (46 aa).

The interval 25 to 46 (TASGRQVLRRRRAKGRYRLAVS) is disordered. Residues 31–46 (VLRRRRAKGRYRLAVS) show a composition bias toward basic residues.

This sequence belongs to the bacterial ribosomal protein bL34 family.

In Synechococcus sp. (strain JA-3-3Ab) (Cyanobacteria bacterium Yellowstone A-Prime), this protein is Large ribosomal subunit protein bL34.